A 377-amino-acid polypeptide reads, in one-letter code: Aquaporin-2 (377 aa).

Residues 1 to 14 are Cytoplasmic-facing; sequence MAANKGINGGIKNH. Residues 15–35 traverse the membrane as a helical segment; that stretch reads FIAFLGEFVGTFLFLFFAYGG. Residues 36–56 are Extracellular-facing; it reads TQTANQTSQKNPSIVASPDIN. A glycan (N-linked (GlcNAc...) asparagine) is linked at N40. A helical membrane pass occupies residues 57-77; the sequence is QLLYIALIFGFSLTVNVWIFF. At 78-87 the chain is on the cytoplasmic side; it reads RVSGGLFNPA. The NPA 1 motif lies at 85 to 87; that stretch reads NPA. A helical membrane pass occupies residues 88–108; it reads VTIALCLVGVVGPVRSIFIFI. Residues 109-144 lie on the Extracellular side of the membrane; sequence AQVVASIAAAAAVRGLLPGDTVLFSCALAPGTSIAQ. The helical transmembrane segment at 145–165 threads the bilayer; that stretch reads GLFLEMFFTIELVFTILMLAA. Residues 166-171 lie on the Cytoplasmic side of the membrane; it reads EKTKVT. Residues 172–192 traverse the membrane as a helical segment; sequence FVAPVGIGLSLFVAELMGVAW. Residues 193–215 lie on the Extracellular side of the membrane; that stretch reads TGGALNPARAFGAEVIGGFRGYH. The NPA 2 signature appears at 198–200; the sequence is NPA. The helical transmembrane segment at 216–236 threads the bilayer; sequence WIYWLGPLMGAVLAAGFYKVI. Topologically, residues 237 to 377 are cytoplasmic; the sequence is KFLNYEQVNG…ANAQNRAKTP (141 aa). Disordered regions lie at residues 278–332 and 358–377; these read LFQT…RENE and RLSG…AKTP. Composition is skewed to polar residues over residues 315–328 and 368–377; these read PAQQ…ASTI and ANAQNRAKTP.

It belongs to the MIP/aquaporin (TC 1.A.8) family.

It is found in the membrane. The catalysed reaction is H2O(in) = H2O(out). It carries out the reaction glycerol(in) = glycerol(out). Functionally, water channel required to facilitate the transport of water across membranes. Involved in conidiation. The chain is Aquaporin-2 from Botryotinia fuckeliana (strain B05.10) (Noble rot fungus).